Consider the following 254-residue polypeptide: 5'/3'-nucleotidase SurE (254 aa).

Residues D9, D10, S40, and N93 each contribute to the a divalent metal cation site.

Belongs to the SurE nucleotidase family. The cofactor is a divalent metal cation.

The protein localises to the cytoplasm. It carries out the reaction a ribonucleoside 5'-phosphate + H2O = a ribonucleoside + phosphate. The catalysed reaction is a ribonucleoside 3'-phosphate + H2O = a ribonucleoside + phosphate. The enzyme catalyses [phosphate](n) + H2O = [phosphate](n-1) + phosphate + H(+). In terms of biological role, nucleotidase with a broad substrate specificity as it can dephosphorylate various ribo- and deoxyribonucleoside 5'-monophosphates and ribonucleoside 3'-monophosphates with highest affinity to 3'-AMP. Also hydrolyzes polyphosphate (exopolyphosphatase activity) with the preference for short-chain-length substrates (P20-25). Might be involved in the regulation of dNTP and NTP pools, and in the turnover of 3'-mononucleotides produced by numerous intracellular RNases (T1, T2, and F) during the degradation of various RNAs. This chain is 5'/3'-nucleotidase SurE, found in Yersinia pseudotuberculosis serotype O:1b (strain IP 31758).